The following is an 867-amino-acid chain: cGMP-dependent 3',5'-cGMP phosphodiesterase A (867 aa).

Over residues 121–146 (IINSSSSTTDTSKTSPIKKQTSSSSP) the composition is skewed to low complexity. 2 disordered regions span residues 121 to 167 (IINS…SQQQ) and 180 to 241 (HHHH…STFP). Residues 147 to 160 (PLSPQQQQPPPPLV) show a composition bias toward pro residues. The span at 191 to 220 (NDNNNNTTTNNNNIEILEQQQQQQQQQQQQ) shows a compositional bias: low complexity. Residues 221 to 232 (QDEDSTDVDEEF) show a composition bias toward acidic residues. The tract at residues 357-503 (STTGFVLWIN…GDTCYDPNRI (147 aa)) is phosphodiesterase activity. A divalent metal cation-binding residues include H399, H401, and D403. A nucleoside 3',5'-cyclic phosphate is bound by residues 607 to 721 (IFRS…WEMR) and 734 to 851 (VFSR…IFVD).

Belongs to the metallo-beta-lactamase superfamily. cNMP phosphodiesterase family. Mn(2+) serves as cofactor. The cofactor is Mg(2+). Requires Zn(2+) as cofactor.

It is found in the cytoplasm. The protein resides in the cytosol. It carries out the reaction 3',5'-cyclic GMP + H2O = GMP + H(+). Its function is as follows. Phosphodiesterase specific for cGMP, which is activated by cGMP but not by cAMP. Involved in the degradation of intracellular cGMP, contributes to the control of cGMP signals. The sequence is that of cGMP-dependent 3',5'-cGMP phosphodiesterase A (pdeD) from Dictyostelium discoideum (Social amoeba).